The primary structure comprises 199 residues: uncharacterized protein (199 aa).

3 consecutive transmembrane segments (helical) span residues 22–44, 65–87, and 91–108; these read VVVV…YLFL, TGFI…HLAL, and HTIT…FFFW.

The protein belongs to the ycf1 family.

Its subcellular location is the mitochondrion membrane. This is an uncharacterized protein from Arabidopsis thaliana (Mouse-ear cress).